We begin with the raw amino-acid sequence, 813 residues long: MGPSGTAHRMRAPLSWLLLLLLSLQVAVPAGALAETLLDAPGARGASSNPPSPASVVAPGTTPFEESRLPVFTLDYPHVQIPFEITLWILLASLAKIGFHLYHKLPTIVPESCLLIMVGLLLGGIIFGVDEKSPPAMKTDVFFLYLLPPIVLDAGYFMPTRPFFENLGTIFWYAVVGTLWNSIGIGLSLFGICQIEAFGLSDITLLQNLLFGSLISAVDPVAVLAVFENIHVNEQLYILVFGESLLNDAVTVVLYNLFKSFCQMKTIQTVDVFAGIANFFVVGIGGVLIGILLGFIAAFTTRFTHNIRVIEPLFVFLYSYLSYITAEMFHLSGIMAITACAMTMNKYVEENVSQKSYTTIKYFMKMLSSVSETLIFIFMGVSTVGKNHEWNWAFVCFTLAFCLIWRALGVFVLTQVINWFRTIPLTFKDQFIIAYGGLRGAICFALVFLLPATVFPRKKLFITAAIVVIFFTVFILGITIRPLVEFLDVKRSNKKQQAVSEEIHCRFFDHVKTGIEDVCGHWGHNFWRDKFKKFDDKYLRKLLIRENQPKSSIVSLYKKLEIKHAIEMAETGMISTVPSFASLNDCREEKIRKLTPGEMDEIREILSRNLYQIRQRTLSYNRHNLTADTSERQAKEILIRRRHSLRESLRKDNSLNRERRASTSTSRYLSLPKNTKLPEKLQKKNKVSNADGNSSDSDMDGTTVLNLQPRARRFLPDQFSKKASPAYKMEWKNEVDVGSARAPPSVTPAPRSKEGGTQTPGVLRQPLLSKDQRFGRGREDSLTEDVPPKPPPRLVRRASEPGNRKGRLGNEKP.

7 helical membrane-spanning segments follow: residues 108-128 (IVPESCLLIMVGLLLGGIIFG), 139-159 (TDVFFLYLLPPIVLDAGYFMP), 170-190 (IFWYAVVGTLWNSIGIGLSLF), 210-230 (LFGSLISAVDPVAVLAVFENI), 238-258 (ILVFGESLLNDAVTVVLYNLF), 279-299 (FFVVGIGGVLIGILLGFIAAF), and 309-329 (VIEPLFVFLYSYLSYITAEMF). N351 carries an N-linked (GlcNAc...) asparagine glycan. 4 helical membrane passes run 362–382 (YFMKMLSSVSETLIFIFMGVS), 393–413 (AFVCFTLAFCLIWRALGVFVL), 431–451 (FIIAYGGLRGAICFALVFLLP), and 460–480 (LFITAAIVVIFFTVFILGITI). Over residues 649–661 (LRKDNSLNRERRA) the composition is skewed to basic and acidic residues. Disordered stretches follow at residues 649–709 (LRKD…NLQP) and 736–813 (DVGS…NEKP). Residues 687-696 (VSNADGNSSD) show a composition bias toward polar residues. Basic and acidic residues-rich tracts occupy residues 770–781 (KDQRFGRGREDS) and 797–813 (RASEPGNRKGRLGNEKP).

The protein belongs to the monovalent cation:proton antiporter 1 (CPA1) transporter (TC 2.A.36) family. In terms of assembly, interacts with CHP1 and CHP2. As to expression, predominantly in small intestine, colon, and stomach, with much lower levels in skeletal muscle, kidney, brain, testis, uterus, heart and lung.

Its subcellular location is the apical cell membrane. The catalysed reaction is Na(+)(in) + H(+)(out) = Na(+)(out) + H(+)(in). With respect to regulation, li(+) activates Na(+)/H(+) exchanger. Functionally, plasma membrane Na(+)/H(+) antiporter. Mediates the electroneutral exchange of intracellular H(+) ions for extracellular Na(+). Major apical Na(+)/H(+) exchanger in the base of the colonic crypt. Controls in the colonic crypt intracellular pH (pHi) to direct colonic epithelial cell differentiation into the absorptive enterocyte lineage at the expense of the secretory lineage. In Rattus norvegicus (Rat), this protein is Sodium/hydrogen exchanger 2 (Slc9a2).